Consider the following 251-residue polypeptide: Large ribosomal subunit protein uL4 (251 aa).

It belongs to the universal ribosomal protein uL4 family. In terms of assembly, part of the 50S ribosomal subunit.

In terms of biological role, one of the primary rRNA binding proteins, this protein initially binds near the 5'-end of the 23S rRNA. It is important during the early stages of 50S assembly. It makes multiple contacts with different domains of the 23S rRNA in the assembled 50S subunit and ribosome. Functionally, forms part of the polypeptide exit tunnel. The sequence is that of Large ribosomal subunit protein uL4 from Methanothrix thermoacetophila (strain DSM 6194 / JCM 14653 / NBRC 101360 / PT) (Methanosaeta thermophila).